Reading from the N-terminus, the 258-residue chain is Acetylglutamate kinase (258 aa).

Substrate contacts are provided by residues G44–G45, R66, and N158. ATP contacts are provided by residues D181 to L186 and I209 to T211.

This sequence belongs to the acetylglutamate kinase family. ArgB subfamily. Homodimer.

The protein resides in the cytoplasm. It catalyses the reaction N-acetyl-L-glutamate + ATP = N-acetyl-L-glutamyl 5-phosphate + ADP. It functions in the pathway amino-acid biosynthesis; L-arginine biosynthesis; N(2)-acetyl-L-ornithine from L-glutamate: step 2/4. Catalyzes the ATP-dependent phosphorylation of N-acetyl-L-glutamate. The protein is Acetylglutamate kinase of Citrobacter koseri (strain ATCC BAA-895 / CDC 4225-83 / SGSC4696).